The following is a 290-amino-acid chain: Diaminopimelate epimerase (290 aa).

The substrate site is built by Asn11 and Asn78. Cys87 acts as the Proton donor in catalysis. Substrate is bound by residues 88 to 89, Asn163, Asn199, and 217 to 218; these read GN and ER. Cys226 functions as the Proton acceptor in the catalytic mechanism. 227–228 is a binding site for substrate; it reads GT.

Belongs to the diaminopimelate epimerase family. In terms of assembly, homodimer.

Its subcellular location is the cytoplasm. The enzyme catalyses (2S,6S)-2,6-diaminopimelate = meso-2,6-diaminopimelate. It participates in amino-acid biosynthesis; L-lysine biosynthesis via DAP pathway; DL-2,6-diaminopimelate from LL-2,6-diaminopimelate: step 1/1. In terms of biological role, catalyzes the stereoinversion of LL-2,6-diaminopimelate (L,L-DAP) to meso-diaminopimelate (meso-DAP), a precursor of L-lysine and an essential component of the bacterial peptidoglycan. This is Diaminopimelate epimerase from Mycobacterium ulcerans (strain Agy99).